The chain runs to 406 residues: E3 ubiquitin-protein ligase RING1 (406 aa).

Thr-24 bears the Phosphothreonine mark. The necessary for transcriptional repression stretch occupies residues 30–234 (MDGTEIAVSP…GGAGSEDSGD (205 aa)). A Phosphoserine modification is found at Ser-38. The RING-type zinc finger occupies 48–88 (CPICLDMLKNTMTTKECLHRFCSDCIVTALRSGNKECPTCR). Residues Ser-140, Ser-187, and Ser-190 each carry the phosphoserine modification. Disordered regions lie at residues 151 to 263 (HRAQ…GEIE) and 309 to 354 (QQQE…PSLE). Over residues 175–187 (EPGEGEGDGEDVS) the composition is skewed to acidic residues. Positions 201–204 (KRPR) match the Nuclear localization signal motif. Gly residues predominate over residues 214–228 (GTGGGAAGGACGGAG). Thr-215 carries the phosphothreonine modification. Phosphoserine is present on residues Ser-229 and Ser-232. A necessary for interaction with CBX2 region spans residues 230–406 (EDSGDRGGTL…LCYAPTKDPK (177 aa)). A compositionally biased stretch (gly residues) spans 235–244 (RGGTLGGGTL). Residues 246 to 258 (PPSPPGAPSPPEP) are compositionally biased toward pro residues. Phosphoserine occurs at positions 248 and 254. A compositionally biased stretch (gly residues) spans 317–343 (GGPGGGASDTGGPDGGGGERGVAGGGE).

Component of chromatin-associated Polycomb (PcG) complexes. Part of the E2F6.com-1 complex in G0 phase composed of E2F6, MGA, MAX, TFDP1, CBX3, BAT8, EUHMTASE1, RING1, RNF2/RING2 MBLR, L3MBTL2 and YAF2. Interacts with CBX2 and PCGF6. Component of a PRC1-like complex. Component of repressive BCOR complex containing Polycomb group subcomplex at least composed of RYBP, PCGF1, BCOR and RNF2/RING2. Interacts with PHC2, PCGF2, RNF2; CBX6, CBX7 and CBX8. Interacts with BMI1. Interacts with MN1. Interacts with USP26.

It is found in the nucleus speckle. The enzyme catalyses S-ubiquitinyl-[E2 ubiquitin-conjugating enzyme]-L-cysteine + [acceptor protein]-L-lysine = [E2 ubiquitin-conjugating enzyme]-L-cysteine + N(6)-ubiquitinyl-[acceptor protein]-L-lysine.. The protein operates within protein modification; protein ubiquitination. Its function is as follows. Constitutes one of the E3 ubiquitin-protein ligases that mediate monoubiquitination of 'Lys-119' of histone H2A, thereby playing a central role in histone code and gene regulation. H2A 'Lys-119' ubiquitination gives a specific tag for epigenetic transcriptional repression and participates in X chromosome inactivation of female mammals. Essential component of a Polycomb group (PcG) multiprotein PRC1-like complex, a complex class required to maintain the transcriptionally repressive state of many genes, including Hox genes, throughout development. PcG PRC1 complex acts via chromatin remodeling and modification of histones, rendering chromatin heritably changed in its expressibility. Compared to RNF2/RING2, it does not have the main E3 ubiquitin ligase activity on histone H2A, and it may rather act as a modulator of RNF2/RING2 activity. In Mus musculus (Mouse), this protein is E3 ubiquitin-protein ligase RING1.